The primary structure comprises 1071 residues: DNA-directed RNA polymerase subunit beta (1071 aa).

This sequence belongs to the RNA polymerase beta chain family. In plastids the minimal PEP RNA polymerase catalytic core is composed of four subunits: alpha, beta, beta', and beta''. When a (nuclear-encoded) sigma factor is associated with the core the holoenzyme is formed, which can initiate transcription.

The protein resides in the plastid. Its subcellular location is the chloroplast. The catalysed reaction is RNA(n) + a ribonucleoside 5'-triphosphate = RNA(n+1) + diphosphate. In terms of biological role, DNA-dependent RNA polymerase catalyzes the transcription of DNA into RNA using the four ribonucleoside triphosphates as substrates. The protein is DNA-directed RNA polymerase subunit beta of Drimys granadensis.